Reading from the N-terminus, the 2602-residue chain is Filamin-B (2602 aa).

The tract at residues 1–239 (MPVTEKDLAE…VMTYLSQFPK (239 aa)) is actin-binding. 2 Calponin-homology (CH) domains span residues 16 to 122 (KIQQ…LHYS) and 139 to 242 (QTPK…KAKL). Thr216 bears the Phosphothreonine mark. The segment at 244-267 (PGAPLKPKLNPKKARAYGRGIEPT) is disordered. Filamin repeat units lie at residues 249–347 (KPKL…EVNV), 349–446 (KAQG…GVQI), 447–543 (GEAC…EVQV), 544–636 (GPEA…MAFI), 640–736 (TGDY…RVNI), 737–839 (GQGS…RVKV), 840–938 (DPSH…TVGV), 939–1034 (AAPL…TVEA), 1035–1127 (SLPP…KADI), 1128–1222 (EMPF…WVKV), 1223–1322 (EPAI…KVAV), 1323–1415 (TEGC…RVPS), 1416–1511 (KDVV…KVKV), 1512–1608 (LPTY…RIRA), and 1609–1704 (TQTG…TVMA). The residue at position 519 (Thr519) is a Phosphothreonine. Lys681 carries the N6-acetyllysine modification. Ser730 is subject to Phosphoserine. The segment covering 837-850 (VKVDPSHDASKVKA) has biased composition (basic and acidic residues). A disordered region spans residues 837 to 862 (VKVDPSHDASKVKAEGPGLSKAGVEN). 4 positions are modified to phosphoserine: Ser886, Ser932, Ser983, and Ser1028. Thr1307 carries the post-translational modification Phosphothreonine. Ser1316 carries the phosphoserine modification. Ser1433, Ser1505, and Ser1602 each carry phosphoserine. Positions 1705 to 1728 (TDGEVTAMEEAPVNACPPGFRPWV) are hinge 1. Filamin repeat units lie at residues 1729–1813 (TEEA…SPLQ), 1816–1908 (VNYP…TAKI), 1919–1994 (KLGS…SIMV), 1997–2089 (SEIG…TVKI), 2091–2185 (GEGR…QFTV), 2188–2280 (LGEG…LVPV), 2282–2375 (APSD…KVRV), and 2379–2471 (GQAG…KAKV). An N6-acetyllysine modification is found at Lys1780. Ser2083 and Ser2113 each carry phosphoserine. 2 positions are modified to phosphoserine: Ser2369 and Ser2465. A Glycyl lysine isopeptide (Lys-Gly) (interchain with G-Cter in ISG15) cross-link involves residue Lys2468. The tract at residues 2472–2506 (TGQRLVSPGSANETSSILVESVTRSSTETCYSAIP) is hinge 2. Residues 2472–2602 (TGQRLVSPGS…PGSPFHVTVP (131 aa)) are self-association site, tail. A phosphoserine mark is found at Ser2478, Ser2481, and Ser2492. The stretch at 2507–2601 (KSSSDASKVT…IPGSPFHVTV (95 aa)) is one Filamin 24 repeat. Lys2518 and Lys2524 each carry N6-succinyllysine. Lys2576 is modified (N6-acetyllysine).

It belongs to the filamin family. In terms of assembly, homodimer. Interacts with FLNA, FLNC, INPPL1, ITGB1A, ITGB1D, ITGB3, ITGB6, MYOT, MYOZ1, PSEN1 and PSEN2. Interacts with MICALL2. Interacts with RFLNA and RFLNB. Interacts with ASB2 isoform 1; the interaction targets FLNB for proteasomal degradation. In terms of processing, ISGylation prevents ability to interact with the upstream activators of the JNK cascade and inhibits IFNA-induced JNK signaling. Post-translationally, ubiquitination by a SCF-like complex containing ASB2 isoform 1 leads to proteasomal degradation which promotes muscle differentiation. As to expression, expressed in hippocampus, cortex, cerebellar Purkinje cells and granule cell layers.

Its subcellular location is the cytoplasm. It is found in the cell cortex. It localises to the cytoskeleton. The protein localises to the stress fiber. The protein resides in the myofibril. Its subcellular location is the sarcomere. It is found in the z line. Functionally, connects cell membrane constituents to the actin cytoskeleton. May promote orthogonal branching of actin filaments and links actin filaments to membrane glycoproteins. Anchors various transmembrane proteins to the actin cytoskeleton. The polypeptide is Filamin-B (Flnb) (Mus musculus (Mouse)).